Here is a 328-residue protein sequence, read N- to C-terminus: Biotin synthase (328 aa).

Residues 51–282 (FNGNHVDLCS…DKIIRYAGGR (232 aa)) form the Radical SAM core domain. The [4Fe-4S] cluster site is built by Cys-69, Cys-73, and Cys-76. Residues Cys-112, Cys-147, Cys-207, and Arg-277 each contribute to the [2Fe-2S] cluster site.

Belongs to the radical SAM superfamily. Biotin synthase family. Homodimer. [4Fe-4S] cluster serves as cofactor. The cofactor is [2Fe-2S] cluster.

The enzyme catalyses (4R,5S)-dethiobiotin + (sulfur carrier)-SH + 2 reduced [2Fe-2S]-[ferredoxin] + 2 S-adenosyl-L-methionine = (sulfur carrier)-H + biotin + 2 5'-deoxyadenosine + 2 L-methionine + 2 oxidized [2Fe-2S]-[ferredoxin]. Its pathway is cofactor biosynthesis; biotin biosynthesis; biotin from 7,8-diaminononanoate: step 2/2. In terms of biological role, catalyzes the conversion of dethiobiotin (DTB) to biotin by the insertion of a sulfur atom into dethiobiotin via a radical-based mechanism. The chain is Biotin synthase from Clostridium acetobutylicum (strain ATCC 824 / DSM 792 / JCM 1419 / IAM 19013 / LMG 5710 / NBRC 13948 / NRRL B-527 / VKM B-1787 / 2291 / W).